A 470-amino-acid chain; its full sequence is Glycine--tRNA ligase (470 aa).

The substrate site is built by R94 and E183. Residues 215–217 (RNE), 225–230 (FRMVEF), 298–299 (EI), and 342–345 (GCDR) each bind ATP. 230-234 (FEQME) serves as a coordination point for substrate. A substrate-binding site is contributed by 338 to 342 (ETSSG).

This sequence belongs to the class-II aminoacyl-tRNA synthetase family. Homodimer.

It is found in the cytoplasm. The catalysed reaction is tRNA(Gly) + glycine + ATP = glycyl-tRNA(Gly) + AMP + diphosphate. Functionally, catalyzes the attachment of glycine to tRNA(Gly). The protein is Glycine--tRNA ligase of Chlorobaculum tepidum (strain ATCC 49652 / DSM 12025 / NBRC 103806 / TLS) (Chlorobium tepidum).